The chain runs to 435 residues: MIGGLFIYNHKGEVLISRVYRDDIGRNAVDAFRVNVIHARQQVRSPVTNIARTSFFHVKRSNIWLAAVTKQNVNAAMVFEFLYKMCDVMTAYFGKISEENIKNNFVLIYELLDEILDFGYPQNSETGALKTFITQQGIKSQHQTKEEQSQITSQVTGQIGWRREGIKYRRNELFLDVLESVNLLMSPQGQVLSAHVSGRVVMKSYLSGMPECKFGMNDKIVIEKQGKGTADETGKTGKQSIAIDDCTFHQCVRLSKFDSERSISFIPPDGEYELMRYRTTKDIILPFRVIPLVREVGRTKLEVKVVIKSNFKPSLLAQKIEVRIPTPLNTSGVQVICMKGKAKYKASENAIVWKIKRMAGMKESQISAEIELLPTNDKKKWARPPISMNFEVPFAPSGLKVRYLKVFEPKLNYSDHDVIKWVRYIGRSGIYETRC.

The MHD domain occupies 170–434; the sequence is RNELFLDVLE…IGRSGIYETR (265 aa). The a 1,2-diacyl-sn-glycero-3-phospho-(1D-myo-inositol-3,4,5-trisphosphate) site is built by K341, K345, and K354.

The protein belongs to the adaptor complexes medium subunit family. As to quaternary structure, adaptor protein complex 2 (AP-2) is a heterotetramer composed of two large adaptins (alpha-type subunit and beta-type subunit), a medium adaptin (mu-type subunit) and a small adaptin (sigma-type subunit).

It localises to the cell membrane. The protein resides in the membrane. The protein localises to the coated pit. Component of the adaptor complexes which link clathrin to receptors in coated vesicles. Clathrin-associated protein complexes are believed to interact with the cytoplasmic tails of membrane proteins, leading to their selection and concentration. AP50 is a subunit of the plasma membrane adaptor. The complex binds polyphosphoinositide-containing lipids. The chain is AP-2 complex subunit mu (ap2m1) from Xenopus laevis (African clawed frog).